Here is a 316-residue protein sequence, read N- to C-terminus: D-alanine--D-alanine ligase (316 aa).

In terms of domain architecture, ATP-grasp spans 109–304; it reads KRLWRGMDLP…FDEMVLQILA (196 aa). 135-190 is an ATP binding site; it reads AADLGLPLIVKPAREGSSLGMMKVESIEALQSAYREAVIFDTAVFAERWLPGAEYT. 3 residues coordinate Mg(2+): Asp-258, Glu-271, and Asn-273.

It belongs to the D-alanine--D-alanine ligase family. The cofactor is Mg(2+). It depends on Mn(2+) as a cofactor.

The protein localises to the cytoplasm. The enzyme catalyses 2 D-alanine + ATP = D-alanyl-D-alanine + ADP + phosphate + H(+). Its pathway is cell wall biogenesis; peptidoglycan biosynthesis. In terms of biological role, cell wall formation. This chain is D-alanine--D-alanine ligase, found in Nitrosococcus oceani (strain ATCC 19707 / BCRC 17464 / JCM 30415 / NCIMB 11848 / C-107).